The following is a 301-amino-acid chain: Mycothiol acetyltransferase (301 aa).

N-acetyltransferase domains are found at residues 7 to 150 (VDWQ…PPVD) and 152 to 301 (VRFA…AVEG). Residue D39 coordinates 1D-myo-inositol 2-(L-cysteinylamino)-2-deoxy-alpha-D-glucopyranoside. Acetyl-CoA contacts are provided by residues 80 to 82 (LVV) and 88 to 93 (RRGIGS). 1D-myo-inositol 2-(L-cysteinylamino)-2-deoxy-alpha-D-glucopyranoside is bound by residues E179, K220, and E228. 232-234 (VGV) serves as a coordination point for acetyl-CoA. Position 271 (Y271) interacts with 1D-myo-inositol 2-(L-cysteinylamino)-2-deoxy-alpha-D-glucopyranoside. Position 276–281 (276–281 (NTAAVK)) interacts with acetyl-CoA.

The protein belongs to the acetyltransferase family. MshD subfamily. Monomer.

The enzyme catalyses 1D-myo-inositol 2-(L-cysteinylamino)-2-deoxy-alpha-D-glucopyranoside + acetyl-CoA = mycothiol + CoA + H(+). In terms of biological role, catalyzes the transfer of acetyl from acetyl-CoA to desacetylmycothiol (Cys-GlcN-Ins) to form mycothiol. The sequence is that of Mycothiol acetyltransferase from Mycolicibacterium vanbaalenii (strain DSM 7251 / JCM 13017 / BCRC 16820 / KCTC 9966 / NRRL B-24157 / PYR-1) (Mycobacterium vanbaalenii).